The following is a 245-amino-acid chain: 1-(5-phosphoribosyl)-5-[(5-phosphoribosylamino)methylideneamino] imidazole-4-carboxamide isomerase (245 aa).

The active-site Proton acceptor is the Asp-7. Catalysis depends on Asp-129, which acts as the Proton donor.

Belongs to the HisA/HisF family.

It localises to the cytoplasm. The catalysed reaction is 1-(5-phospho-beta-D-ribosyl)-5-[(5-phospho-beta-D-ribosylamino)methylideneamino]imidazole-4-carboxamide = 5-[(5-phospho-1-deoxy-D-ribulos-1-ylimino)methylamino]-1-(5-phospho-beta-D-ribosyl)imidazole-4-carboxamide. It functions in the pathway amino-acid biosynthesis; L-histidine biosynthesis; L-histidine from 5-phospho-alpha-D-ribose 1-diphosphate: step 4/9. The chain is 1-(5-phosphoribosyl)-5-[(5-phosphoribosylamino)methylideneamino] imidazole-4-carboxamide isomerase from Escherichia coli O45:K1 (strain S88 / ExPEC).